The chain runs to 448 residues: Homogentisate 1,2-dioxygenase (448 aa).

His340, Glu346, and His377 together coordinate Fe cation.

This sequence belongs to the homogentisate dioxygenase family. Fe cation serves as cofactor.

The catalysed reaction is homogentisate + O2 = 4-maleylacetoacetate + H(+). It functions in the pathway amino-acid degradation; L-phenylalanine degradation; acetoacetate and fumarate from L-phenylalanine: step 4/6. The polypeptide is Homogentisate 1,2-dioxygenase (hmgA) (Emericella nidulans (strain FGSC A4 / ATCC 38163 / CBS 112.46 / NRRL 194 / M139) (Aspergillus nidulans)).